Reading from the N-terminus, the 591-residue chain is Serine/threonine-protein phosphatase PP2A 65 kDa regulatory subunit (591 aa).

The residue at position 2 (A2) is an N-acetylalanine. 15 HEAT repeats span residues D10–R48, T49–E86, F87–D125, L126–P163, V164–Y202, L203–D241, V242–I280, T281–I323, I324–Q362, T363–Q401, L402–F440, F441–W479, A480–I518, T519–V557, and I558–A591.

The protein belongs to the phosphatase 2A regulatory subunit A family. In terms of assembly, PP2A exists in several trimeric forms, all of which consist of a core composed of a catalytic subunit associated with a 65 kDa regulatory subunit (PR65) (subunit A). The core complex associates with a third, variable subunit (subunit B), which confers distinct properties to the holoenzyme. Interacts with the inorganic phosphate transporter PXo (CG10483). Component of the Integrator-PP2A (INTAC) complex, composed of the Integrator core complex and protein phosphatase 2A subunits mts/PP2A and Pp2A-29B. As to expression, expression varies in tissues throughout development. Highly distributed expression in early embryos. In late embryonal development, found at high levels in nervous system and gonads. In third instar larvae, found in brain, imaginal disks and salivary glands.

It localises to the nucleus. The PR65 subunit of protein phosphatase 2A serves as a scaffolding molecule to coordinate the assembly of the catalytic subunit and a variable regulatory B subunit. Key mediator of a quality checkpoint during transcription elongation as part of the Integrator-PP2A (INTAC) complex. The INTAC complex drives premature transcription termination of transcripts that are unfavorably configured for transcriptional elongation: within the INTAC complex, acts as a scaffolding subunit for mts/PP2A, which catalyzes dephosphorylation of the C-terminal domain (CTD) of Pol II subunit POLR2A/RPB1 and Spt5, thereby preventing transcriptional elongation. The sequence is that of Serine/threonine-protein phosphatase PP2A 65 kDa regulatory subunit (Pp2A-29B) from Drosophila melanogaster (Fruit fly).